A 444-amino-acid chain; its full sequence is Acyl-CoA 6-desaturase (444 aa).

Residues 1-21 (MGKGGNQGEGSTERQAPMPTF) form a disordered region. Residues 1-130 (MGKGGNQGEG…EDMNLFKTNH (130 aa)) lie on the Cytoplasmic side of the membrane. In terms of domain architecture, Cytochrome b5 heme-binding spans 18–95 (MPTFRWEEIQ…LKPLLIGELA (78 aa)). A helical membrane pass occupies residues 131-151 (LFFFLLLSHIIVMESLAWFIL). Ser-152 is a topological domain (lumenal). The helical transmembrane segment at 153 to 173 (YFGTGWIPTLVTAFVLATSQA) threads the bilayer. The Cytoplasmic portion of the chain corresponds to 174 to 264 (QAGWLQHDYG…KYLPYNHQHE (91 aa)). The Histidine box-1 signature appears at 180-184 (HDYGH). Positions 217–221 (HFQHH) match the Histidine box-2 motif. A helical transmembrane segment spans residues 265 to 285 (YFFLIGPPLLIPMYFQYQIIM). Residues 286–305 (TMISRRDWVDLAWAISYYMR) are Lumenal-facing. A helical membrane pass occupies residues 306–326 (FFYTYIPFYGILGALVFLNFI). Residues 327–444 (RFLESHWFVW…ELWLDAYLHK (118 aa)) are Cytoplasmic-facing. A Histidine box-3 motif is present at residues 382–386 (QIEHH).

The protein belongs to the fatty acid desaturase type 1 family. Highly expressed in the adrenal gland, liver, brain, and testis, tissues where lipogenesis and steroidogenesis are active. Also detected in lung, heart, and skeletal muscle.

It is found in the endoplasmic reticulum membrane. The catalysed reaction is (9Z,12Z)-octadecadienoyl-CoA + 2 Fe(II)-[cytochrome b5] + O2 + 2 H(+) = (6Z,9Z,12Z)-octadecatrienoyl-CoA + 2 Fe(III)-[cytochrome b5] + 2 H2O. It carries out the reaction (9Z,12Z,15Z)-octadecatrienoyl-CoA + 2 Fe(II)-[cytochrome b5] + O2 + 2 H(+) = (6Z,9Z,12Z,15Z)-octadecatetraenoyl-CoA + 2 Fe(III)-[cytochrome b5] + 2 H2O. It catalyses the reaction (9Z,12Z,15Z,18Z,21Z)-tetracosapentaenoyl-CoA + 2 Fe(II)-[cytochrome b5] + O2 + 2 H(+) = (6Z,9Z,12Z,15Z,18Z,21Z)-tetracosahexaenoyl-CoA + 2 Fe(III)-[cytochrome b5] + 2 H2O. The enzyme catalyses (11E)-octadecenoyl-CoA + 2 Fe(II)-[cytochrome b5] + O2 + 2 H(+) = (6Z,11E)-octadecadienoyl-CoA + 2 Fe(III)-[cytochrome b5] + 2 H2O. The catalysed reaction is (11Z,14Z)-eicosadienoyl-CoA + 2 Fe(II)-[cytochrome b5] + O2 + 2 H(+) = (8Z,11Z,14Z)-eicosatrienoyl-CoA + 2 Fe(III)-[cytochrome b5] + 2 H2O. It carries out the reaction (11Z,14Z,17Z)-eicosatrienoyl-CoA + 2 Fe(II)-[cytochrome b5] + O2 + 2 H(+) = (8Z,11Z,14Z,17Z)-eicosatetraenoyl-CoA + 2 Fe(III)-[cytochrome b5] + 2 H2O. Its pathway is lipid metabolism; polyunsaturated fatty acid biosynthesis. In terms of biological role, involved in the biosynthesis of highly unsaturated fatty acids (HUFA) from the essential polyunsaturated fatty acids (PUFA) linoleic acid (LA) (18:2n-6) and alpha-linolenic acid (ALA) (18:3n-3) precursors, acting as a fatty acyl-coenzyme A (CoA) desaturase that introduces a cis double bond at carbon 6 of the fatty acyl chain. Catalyzes the first and rate limiting step in this pathway which is the desaturation of LA (18:2n-6) and ALA (18:3n-3) into gamma-linoleate (GLA) (18:3n-6) and stearidonate (18:4n-3), respectively. Subsequently, in the biosynthetic pathway of HUFA n-3 series, it desaturates tetracosapentaenoate (24:5n-3) to tetracosahexaenoate (24:6n-3), which is then converted to docosahexaenoate (DHA)(22:6n-3), an important lipid for nervous system function. It can also desaturate (11E)-octadecenoate (trans-vaccenoate) at carbon 6 generating (6Z,11E)-octadecadienoate. In addition to Delta-6 activity, this enzyme exhibits Delta-8 activity with slight biases toward n-3 fatty acyl-CoA substrates. This Mus musculus (Mouse) protein is Acyl-CoA 6-desaturase.